A 318-amino-acid chain; its full sequence is Galactofuranose-binding protein YtfQ (318 aa).

Positions 1–21 are cleaved as a signal peptide; it reads MWKRLLIVSAVSAAMSSMALA. Beta-D-galactofuranose contacts are provided by residues 34–38, 111–112, Arg-167, Asn-220, and Asp-248; these read ESGWR and DR. Cys-150 and Cys-214 form a disulfide bridge.

The protein belongs to the bacterial solute-binding protein 2 family. As to quaternary structure, the complex is composed of two ATP-binding proteins (YtfR), two transmembrane proteins (YtfT and YjfF) and a solute-binding protein (YtfQ).

The protein resides in the periplasm. Functionally, part of the ABC transporter complex YtfQRT-YjfF involved in galactofuranose transport. Binds to both alpha- and beta-galactofuranose. This Escherichia coli (strain K12) protein is Galactofuranose-binding protein YtfQ (ytfQ).